A 239-amino-acid polypeptide reads, in one-letter code: 1-(5-phosphoribosyl)-5-[(5-phosphoribosylamino)methylideneamino] imidazole-4-carboxamide isomerase (239 aa).

The Proton acceptor role is filled by D8. Catalysis depends on D129, which acts as the Proton donor.

This sequence belongs to the HisA/HisF family.

The protein localises to the cytoplasm. It carries out the reaction 1-(5-phospho-beta-D-ribosyl)-5-[(5-phospho-beta-D-ribosylamino)methylideneamino]imidazole-4-carboxamide = 5-[(5-phospho-1-deoxy-D-ribulos-1-ylimino)methylamino]-1-(5-phospho-beta-D-ribosyl)imidazole-4-carboxamide. The protein operates within amino-acid biosynthesis; L-histidine biosynthesis; L-histidine from 5-phospho-alpha-D-ribose 1-diphosphate: step 4/9. In Paramagnetospirillum magneticum (strain ATCC 700264 / AMB-1) (Magnetospirillum magneticum), this protein is 1-(5-phosphoribosyl)-5-[(5-phosphoribosylamino)methylideneamino] imidazole-4-carboxamide isomerase.